A 241-amino-acid chain; its full sequence is 15,16-dihydrobiliverdin:ferredoxin oxidoreductase (241 aa).

It belongs to the HY2 family.

The enzyme catalyses 15,16-dihydrobiliverdin + oxidized 2[4Fe-4S]-[ferredoxin] = biliverdin IXalpha + reduced 2[4Fe-4S]-[ferredoxin] + 2 H(+). Functionally, catalyzes the two-electron reduction of biliverdin IX-alpha at the C15 methine bridge. The chain is 15,16-dihydrobiliverdin:ferredoxin oxidoreductase (pebA) from Prochlorococcus marinus (strain SARG / CCMP1375 / SS120).